Here is a 253-residue protein sequence, read N- to C-terminus: Imidazole glycerol phosphate synthase subunit HisF (253 aa).

Active-site residues include Asp11 and Asp130.

It belongs to the HisA/HisF family. In terms of assembly, heterodimer of HisH and HisF.

It localises to the cytoplasm. The catalysed reaction is 5-[(5-phospho-1-deoxy-D-ribulos-1-ylimino)methylamino]-1-(5-phospho-beta-D-ribosyl)imidazole-4-carboxamide + L-glutamine = D-erythro-1-(imidazol-4-yl)glycerol 3-phosphate + 5-amino-1-(5-phospho-beta-D-ribosyl)imidazole-4-carboxamide + L-glutamate + H(+). The protein operates within amino-acid biosynthesis; L-histidine biosynthesis; L-histidine from 5-phospho-alpha-D-ribose 1-diphosphate: step 5/9. In terms of biological role, IGPS catalyzes the conversion of PRFAR and glutamine to IGP, AICAR and glutamate. The HisF subunit catalyzes the cyclization activity that produces IGP and AICAR from PRFAR using the ammonia provided by the HisH subunit. The sequence is that of Imidazole glycerol phosphate synthase subunit HisF from Geobacter sulfurreducens (strain ATCC 51573 / DSM 12127 / PCA).